Here is a 694-residue protein sequence, read N- to C-terminus: Elongation factor G (694 aa).

The tr-type G domain maps to 6–288 (KLYRNIGIAA…GVIEYLPSPT (283 aa)). Residues 15-22 (AHVDAGKT), 86-90 (DTPGH), and 140-143 (NKMD) contribute to the GTP site.

The protein belongs to the TRAFAC class translation factor GTPase superfamily. Classic translation factor GTPase family. EF-G/EF-2 subfamily.

The protein localises to the cytoplasm. Its function is as follows. Catalyzes the GTP-dependent ribosomal translocation step during translation elongation. During this step, the ribosome changes from the pre-translocational (PRE) to the post-translocational (POST) state as the newly formed A-site-bound peptidyl-tRNA and P-site-bound deacylated tRNA move to the P and E sites, respectively. Catalyzes the coordinated movement of the two tRNA molecules, the mRNA and conformational changes in the ribosome. This chain is Elongation factor G, found in Legionella pneumophila (strain Lens).